The following is a 941-amino-acid chain: Myosin heavy chain kinase D (941 aa).

Residues 8–48 adopt a coiled-coil conformation; it reads KLSKKIEKILEKNDYLKKKVEQLTKSVDNHEFKIQELLLLL. 3 stretches are compositionally biased toward low complexity: residues 57–70, 84–115, and 124–206; these read TTTTTTTTTNNNST, TSTDSMTNSNNSSATSSTTPSPTQTSTITTTS, and NSNN…PQLS. 2 disordered regions span residues 57–234 and 276–310; these read TTTT…KEDS and SSNNTDSTNNDNSSILNDQQNQQQNQQQQNQQQQQ. Residues 289 to 317 adopt a coiled-coil conformation; that stretch reads SILNDQQNQQQNQQQQNQQQQQEEINFIT. In terms of domain architecture, Alpha-type protein kinase spans 337-582; sequence EYSANDDEWT…ICLQFGLPPI (246 aa). 7 WD repeats span residues 635-674, 683-720, 741-780, 783-820, 824-861, 864-902, and 909-941; these read GHDERVCSLLINQDKTKLYSASADGYVKIWNLTNNEDLSK, AHRRSIEKMLLNEKYLFTASSDGTIKIWSLPTTTTTTT, DHTAEVNDMCIDIENNFLVSCSFDKQIKIYDLSTFKCIKS, AHGKSIKSIYMSGKYLFSSSNDQSIKIWDLEMCMCVYG, AHDAPITSLRMFGNRLFSASKDGEIKDWNLSTFQPTTT, QHNMAITDILVTSNGYLFVSSDDSTIRIIDISNQNEPIK, and AHRSGVNSLATDGKRIFSGGCDNLIKVWNWKNK.

The protein belongs to the protein kinase superfamily. Alpha-type protein kinase family. ALPK subfamily.

It catalyses the reaction L-threonyl-[myosin heavy-chain] + ATP = O-phospho-L-threonyl-[myosin heavy-chain] + ADP + H(+). Functionally, phosphorylates threonine. Not critical for regulating the assembly and disassembly of myosin II filament. The sequence is that of Myosin heavy chain kinase D (mhkD) from Dictyostelium discoideum (Social amoeba).